We begin with the raw amino-acid sequence, 129 residues long: L-ectoine synthase (129 aa).

The protein belongs to the ectoine synthase family.

It catalyses the reaction (2S)-4-acetamido-2-aminobutanoate = L-ectoine + H2O. It participates in amine and polyamine biosynthesis; ectoine biosynthesis; L-ectoine from L-aspartate 4-semialdehyde: step 3/3. In terms of biological role, catalyzes the circularization of gamma-N-acetyl-alpha,gamma-diaminobutyric acid (ADABA) to ectoine (1,4,5,6-tetrahydro-2-methyl-4-pyrimidine carboxylic acid), which is an excellent osmoprotectant. This Marinomonas sp. (strain MWYL1) protein is L-ectoine synthase.